Consider the following 250-residue polypeptide: 5'-nucleotidase SurE (250 aa).

A divalent metal cation is bound by residues Asp-8, Asp-9, Ser-39, and Asn-95.

The protein belongs to the SurE nucleotidase family. Requires a divalent metal cation as cofactor.

It is found in the cytoplasm. It catalyses the reaction a ribonucleoside 5'-phosphate + H2O = a ribonucleoside + phosphate. Functionally, nucleotidase that shows phosphatase activity on nucleoside 5'-monophosphates. This chain is 5'-nucleotidase SurE, found in Cupriavidus pinatubonensis (strain JMP 134 / LMG 1197) (Cupriavidus necator (strain JMP 134)).